The primary structure comprises 489 residues: MGGQCSSLSCCRNTSHKTAVLEAPDVDNGESSEITDVPNFREYTLEQLKAATSGFAVEYIVSEHGEKAPNVVYKGKLENQKKIAVKRFTRMAWPDSRQFLEEARSVGQLRSERMANLLGCCCEGDERLLVAEFMPNETLAKHLFHWETQPMKWTMRLRVVLYLAQALEYCTSKGRTLYHDLNAYRVLFDEECNPRLSTFGLMKNSRDGKSYSTNLAFTPPEYLRTGRITPESVIYSFGTLLLDLLSGKHIPPSHALDLIRDRNLQTLTDSCLDGQFSDSDGTELVRLASRCLQYEARERPNTKSLVTALTPLQKETEVLSHVLMGLPHSGSVSPLSPLGEACSRRDLTAMLEILEKLGYKDDEGVTNELSFHMWTDQMQESLNSKKKGDVAFRQKDFREAIECYTQFIDGGMISPTVCARRSLCYLMSDMPKEALDDAIQAQVISPVWHVASYLQSASLGILGMEKESQIALKEGSNLEAKMNGVPRVK.

Glycine 2 carries the N-myristoyl glycine lipid modification. A Protein kinase domain is found at 58-324; the sequence is EYIVSEHGEK…ETEVLSHVLM (267 aa). ATP contacts are provided by residues 64-72 and lysine 86; that span reads HGEKAPNVV. Aspartate 180 serves as the catalytic Proton acceptor. The residue at position 212 (serine 212) is a Phosphoserine.

Belongs to the protein kinase superfamily. Ser/Thr protein kinase family. In terms of assembly, interacts with BRI1. Phosphorylated by BRI1 upon brassinolide (BL) treatment. Phosphorylated by ASK7/BIN2 and ASK9/BIL2.

The protein resides in the cell membrane. It carries out the reaction L-seryl-[protein] + ATP = O-phospho-L-seryl-[protein] + ADP + H(+). The catalysed reaction is L-threonyl-[protein] + ATP = O-phospho-L-threonyl-[protein] + ADP + H(+). Functionally, probable serine/threonine kinase that acts as a positive regulator of brassinosteroid (BR) signaling downstream of the receptor kinase BRI1. Mediates signal transduction from BRI1 by functioning as substrate of BRI1. Functions redundantly with BSK4, BSK6, BSK7 and BSK8. In Arabidopsis thaliana (Mouse-ear cress), this protein is Serine/threonine-protein kinase BSK3.